The chain runs to 129 residues: Cytochrome c' (129 aa).

Heme c-binding residues include Arg12, Gln13, Thr69, Glu70, Cys119, Cys122, and His123.

Post-translationally, binds 1 heme c group covalently per subunit.

In terms of biological role, cytochrome c' is the most widely occurring bacterial c-type cytochrome. Cytochromes c' are high-spin proteins and the heme has no sixth ligand. Their exact function is not known. This Rubrivivax gelatinosus (Rhodocyclus gelatinosus) protein is Cytochrome c'.